The following is a 272-amino-acid chain: Putative pyruvate, phosphate dikinase regulatory protein (272 aa).

153 to 160 (GVSRTSKT) serves as a coordination point for ADP.

Belongs to the pyruvate, phosphate/water dikinase regulatory protein family. PDRP subfamily.

It catalyses the reaction N(tele)-phospho-L-histidyl/L-threonyl-[pyruvate, phosphate dikinase] + ADP = N(tele)-phospho-L-histidyl/O-phospho-L-threonyl-[pyruvate, phosphate dikinase] + AMP + H(+). The catalysed reaction is N(tele)-phospho-L-histidyl/O-phospho-L-threonyl-[pyruvate, phosphate dikinase] + phosphate + H(+) = N(tele)-phospho-L-histidyl/L-threonyl-[pyruvate, phosphate dikinase] + diphosphate. In terms of biological role, bifunctional serine/threonine kinase and phosphorylase involved in the regulation of the pyruvate, phosphate dikinase (PPDK) by catalyzing its phosphorylation/dephosphorylation. This is Putative pyruvate, phosphate dikinase regulatory protein from Chelativorans sp. (strain BNC1).